The sequence spans 494 residues: Histidine--tRNA ligase (494 aa).

It belongs to the class-II aminoacyl-tRNA synthetase family. Homodimer.

It localises to the cytoplasm. It carries out the reaction tRNA(His) + L-histidine + ATP = L-histidyl-tRNA(His) + AMP + diphosphate + H(+). The sequence is that of Histidine--tRNA ligase from Cereibacter sphaeroides (strain ATCC 17023 / DSM 158 / JCM 6121 / CCUG 31486 / LMG 2827 / NBRC 12203 / NCIMB 8253 / ATH 2.4.1.) (Rhodobacter sphaeroides).